Here is a 168-residue protein sequence, read N- to C-terminus: ATP synthase subunit b (168 aa).

A helical membrane pass occupies residues 10–30 (STILGNFILVTASFAVLIILI).

This sequence belongs to the ATPase B chain family. In terms of assembly, F-type ATPases have 2 components, F(1) - the catalytic core - and F(0) - the membrane proton channel. F(1) has five subunits: alpha(3), beta(3), gamma(1), delta(1), epsilon(1). F(0) has three main subunits: a(1), b(2) and c(10-14). The alpha and beta chains form an alternating ring which encloses part of the gamma chain. F(1) is attached to F(0) by a central stalk formed by the gamma and epsilon chains, while a peripheral stalk is formed by the delta and b chains.

The protein resides in the cell membrane. In terms of biological role, f(1)F(0) ATP synthase produces ATP from ADP in the presence of a proton or sodium gradient. F-type ATPases consist of two structural domains, F(1) containing the extramembraneous catalytic core and F(0) containing the membrane proton channel, linked together by a central stalk and a peripheral stalk. During catalysis, ATP synthesis in the catalytic domain of F(1) is coupled via a rotary mechanism of the central stalk subunits to proton translocation. Component of the F(0) channel, it forms part of the peripheral stalk, linking F(1) to F(0). The protein is ATP synthase subunit b of Streptococcus suis (strain 98HAH33).